Consider the following 517-residue polypeptide: NEDD8-activating enzyme E1 regulatory subunit (517 aa).

The protein belongs to the ubiquitin-activating E1 family. ULA1 subfamily. As to quaternary structure, heterodimer of uba3 and ula1. The complex binds NEDD8/ubl1 and ubc12.

It is found in the cytoplasm. The protein localises to the nucleus. The protein operates within protein modification; protein neddylation. Regulatory subunit of the dimeric uba3-ula1 E1 enzyme. E1 activates NEDD8/ubl1 by first adenylating its C-terminal glycine residue with ATP, thereafter linking this residue to the side chain of the catalytic cysteine, yielding a NEDD8-UBA3 thioester and free AMP. E1 finally transfers NEDD8 to the catalytic cysteine of ubc12. The polypeptide is NEDD8-activating enzyme E1 regulatory subunit (uba5) (Schizosaccharomyces pombe (strain 972 / ATCC 24843) (Fission yeast)).